The primary structure comprises 347 residues: 3-isopropylmalate dehydrogenase (347 aa).

R94, R104, R128, and D219 together coordinate substrate. D219, D243, and D247 together coordinate Mg(2+). 279 to 291 (GSAPDIAGQGKAD) provides a ligand contact to NAD(+).

The protein belongs to the isocitrate and isopropylmalate dehydrogenases family. LeuB type 2 subfamily. Homodimer. It depends on Mg(2+) as a cofactor. The cofactor is Mn(2+).

The protein resides in the cytoplasm. The enzyme catalyses (2R,3S)-3-isopropylmalate + NAD(+) = 4-methyl-2-oxopentanoate + CO2 + NADH. Its pathway is amino-acid biosynthesis; L-leucine biosynthesis; L-leucine from 3-methyl-2-oxobutanoate: step 3/4. In terms of biological role, catalyzes the oxidation of 3-carboxy-2-hydroxy-4-methylpentanoate (3-isopropylmalate) to 3-carboxy-4-methyl-2-oxopentanoate. The product decarboxylates to 4-methyl-2 oxopentanoate. This is 3-isopropylmalate dehydrogenase from Streptomyces coelicolor (strain ATCC BAA-471 / A3(2) / M145).